Reading from the N-terminus, the 319-residue chain is Cutinase cut1 (319 aa).

The signal sequence occupies residues 1 to 58; it reads MPPHAARPGPAQNRRGRAMAVITPRRERSSLLSRALRFTAAAATALVTAVSLAAPAHA. Poly(ethylene terephthalate) is bound at residue Y118. The Nucleophile role is filled by S188. Poly(ethylene terephthalate) is bound by residues M189 and W213. Residues D234 and H266 each act as charge relay system in the active site. The cysteines at positions 299 and 317 are disulfide-linked.

This sequence belongs to the AB hydrolase superfamily.

It is found in the secreted. It localises to the periplasm. The enzyme catalyses an acetyl ester + H2O = an aliphatic alcohol + acetate + H(+). It carries out the reaction a butanoate ester + H2O = an aliphatic alcohol + butanoate + H(+). It catalyses the reaction pentanoate ester + H2O = pentanoate + an aliphatic alcohol + H(+). The catalysed reaction is an octanoate ester + H2O = an aliphatic alcohol + octanoate + H(+). The enzyme catalyses decanoate ester + H2O = decanoate + an aliphatic alcohol + H(+). It carries out the reaction a dodecanoate ester + H2O = an aliphatic alcohol + dodecanoate + H(+). It catalyses the reaction a tetradecanoate ester + H2O = an aliphatic alcohol + tetradecanoate + H(+). The catalysed reaction is hexadecanoate ester + H2O = an aliphatic alcohol + hexadecanoate + H(+). The enzyme catalyses cutin + H2O = cutin monomers.. It carries out the reaction (ethylene terephthalate)(n) + H2O = (ethylene terephthalate)(n-1) + 4-[(2-hydroxyethoxy)carbonyl]benzoate + H(+). Activated by magnesium ions. Activated by calcium ions. Its function is as follows. Catalyzes the hydrolysis of cutin, a polyester that forms the structure of plant cuticle. Shows esterase activity towards p-nitrophenol-linked aliphatic esters (pNP-aliphatic esters). Capable of degrading the plastic poly(ethylene terephthalate) (PET), the most abundant polyester plastic in the world. This Thermobifida fusca (Thermomonospora fusca) protein is Cutinase cut1.